Reading from the N-terminus, the 206-residue chain is Large ribosomal subunit protein uL4 (206 aa).

The protein belongs to the universal ribosomal protein uL4 family. As to quaternary structure, part of the 50S ribosomal subunit.

One of the primary rRNA binding proteins, this protein initially binds near the 5'-end of the 23S rRNA. It is important during the early stages of 50S assembly. It makes multiple contacts with different domains of the 23S rRNA in the assembled 50S subunit and ribosome. Its function is as follows. Forms part of the polypeptide exit tunnel. This is Large ribosomal subunit protein uL4 from Nitrobacter hamburgensis (strain DSM 10229 / NCIMB 13809 / X14).